The primary structure comprises 429 residues: 3-phosphoshikimate 1-carboxyvinyltransferase (429 aa).

3-phosphoshikimate-binding residues include lysine 20, serine 21, and arginine 25. Lysine 20 contributes to the phosphoenolpyruvate binding site. 2 residues coordinate phosphoenolpyruvate: glycine 89 and arginine 118. The 3-phosphoshikimate site is built by serine 164, serine 165, glutamine 166, serine 192, aspartate 311, and lysine 338. Glutamine 166 lines the phosphoenolpyruvate pocket. Residue aspartate 311 is the Proton acceptor of the active site. Phosphoenolpyruvate-binding residues include arginine 342 and arginine 384.

It belongs to the EPSP synthase family. Monomer.

It is found in the cytoplasm. The catalysed reaction is 3-phosphoshikimate + phosphoenolpyruvate = 5-O-(1-carboxyvinyl)-3-phosphoshikimate + phosphate. It participates in metabolic intermediate biosynthesis; chorismate biosynthesis. Its function is as follows. Catalyzes the transfer of the enolpyruvyl moiety of phosphoenolpyruvate (PEP) to the 5-hydroxyl of shikimate-3-phosphate (S3P) to produce enolpyruvyl shikimate-3-phosphate and inorganic phosphate. The chain is 3-phosphoshikimate 1-carboxyvinyltransferase from Methanococcus maripaludis (strain C6 / ATCC BAA-1332).